A 155-amino-acid chain; its full sequence is Large ribosomal subunit protein uL30 (155 aa).

This sequence belongs to the universal ribosomal protein uL30 family. Part of the 50S ribosomal subunit.

This chain is Large ribosomal subunit protein uL30, found in Nitrosopumilus maritimus (strain SCM1).